The sequence spans 146 residues: 3-dehydroquinate dehydratase (146 aa).

Residue Tyr23 is the Proton acceptor of the active site. Substrate is bound by residues Asn74, His80, and Asp87. Catalysis depends on His100, which acts as the Proton donor. Residues 101–102 (IS) and Arg111 each bind substrate.

This sequence belongs to the type-II 3-dehydroquinase family. In terms of assembly, homododecamer.

The enzyme catalyses 3-dehydroquinate = 3-dehydroshikimate + H2O. It participates in metabolic intermediate biosynthesis; chorismate biosynthesis; chorismate from D-erythrose 4-phosphate and phosphoenolpyruvate: step 3/7. In terms of biological role, catalyzes a trans-dehydration via an enolate intermediate. The chain is 3-dehydroquinate dehydratase from Bacillus cereus (strain ATCC 14579 / DSM 31 / CCUG 7414 / JCM 2152 / NBRC 15305 / NCIMB 9373 / NCTC 2599 / NRRL B-3711).